The following is a 289-amino-acid chain: (3R)-3-[(carboxymethyl)amino]fatty acid oxygenase/decarboxylase (289 aa).

A (3R)-3-[(carboxymethyl)amino]fatty acid contacts are provided by Tyr-65, Tyr-70, and Gly-93. Residues His-97 and Asp-99 each coordinate Fe(2+). A (3R)-3-[(carboxymethyl)amino]fatty acid contacts are provided by Tyr-100 and Lys-158. His-260 provides a ligand contact to Fe(2+). Position 264 (His-264) interacts with 2-oxoglutarate. A (3R)-3-[(carboxymethyl)amino]fatty acid is bound at residue Arg-275.

This sequence belongs to the TfdA dioxygenase family. Requires Fe(2+) as cofactor.

It catalyses the reaction a (3R)-3-[(carboxymethyl)amino]fatty acid + 2 2-oxoglutarate + 2 O2 = a (3R)-3-isocyanyl-fatty acid + 2 succinate + 3 CO2 + 2 H2O. It carries out the reaction a (3R)-3-[(carboxymethyl)amino]fatty acid + 2-oxoglutarate + O2 = a (3R)-3-{[carboxy(hydroxy)methyl]amino}fatty acid + succinate + CO2. The enzyme catalyses a (3R)-3-{[carboxy(hydroxy)methyl]amino}fatty acid + 2-oxoglutarate + O2 = a (3R)-3-isocyanyl-fatty acid + succinate + 2 CO2 + 2 H2O. In terms of biological role, involved in the biosynthesis of a unique class of isonitrile lipopeptides (INLPs) that seem to play a role in metal acquisition. Catalyzes the conversion of (3R)-3-[(carboxymethyl)amino]fatty acids to (3R)-3-isocyanyl-fatty acids through an oxidative decarboxylation mechanism, thereby generating the isonitrile group of INLPs. This Mycobacterium bovis (strain ATCC BAA-935 / AF2122/97) protein is (3R)-3-[(carboxymethyl)amino]fatty acid oxygenase/decarboxylase.